Here is a 191-residue protein sequence, read N- to C-terminus: Protein Ves (191 aa).

This sequence belongs to the Ves family.

The polypeptide is Protein Ves (Escherichia coli (strain SE11)).